Consider the following 152-residue polypeptide: MSEKYVVTWDMLQIHARKLAQRLLPADQWKGIIAVSRGGLVPSALLARELGIRHVDTVCISSYDHDNQREMKVLKRAEGDGEGFIVIDDLVDTGGTAKAIRDMYPKAHFVTIFAKPAGKPLVDDYVIDIPQDTWIEQPWDMGVVFVPPLSGR.

Residues 37-38 (RG), R69, and 88-96 (DDLVDTGGT) contribute to the 5-phospho-alpha-D-ribose 1-diphosphate site. R69 contributes to the GMP binding site. A Mg(2+)-binding site is contributed by D89. Residues D92 and I135 each coordinate guanine. Xanthine-binding residues include D92 and I135. GMP is bound by residues 92–96 (DTGGT) and 134–135 (WI).

The protein belongs to the purine/pyrimidine phosphoribosyltransferase family. XGPT subfamily. Homotetramer. The cofactor is Mg(2+).

The protein resides in the cell inner membrane. It carries out the reaction GMP + diphosphate = guanine + 5-phospho-alpha-D-ribose 1-diphosphate. It catalyses the reaction XMP + diphosphate = xanthine + 5-phospho-alpha-D-ribose 1-diphosphate. The catalysed reaction is IMP + diphosphate = hypoxanthine + 5-phospho-alpha-D-ribose 1-diphosphate. The protein operates within purine metabolism; GMP biosynthesis via salvage pathway; GMP from guanine: step 1/1. It participates in purine metabolism; XMP biosynthesis via salvage pathway; XMP from xanthine: step 1/1. In terms of biological role, purine salvage pathway enzyme that catalyzes the transfer of the ribosyl-5-phosphate group from 5-phospho-alpha-D-ribose 1-diphosphate (PRPP) to the N9 position of the 6-oxopurines guanine and xanthine to form the corresponding ribonucleotides GMP (guanosine 5'-monophosphate) and XMP (xanthosine 5'-monophosphate), with the release of PPi. To a lesser extent, also acts on hypoxanthine. The sequence is that of Xanthine-guanine phosphoribosyltransferase from Pectobacterium carotovorum subsp. carotovorum (strain PC1).